The chain runs to 1162 residues: Integrin alpha-L (1162 aa).

Positions 1–23 are cleaved as a signal peptide; sequence MSFRIAGPRLLLLGLQLFAKAWS. The Extracellular portion of the chain corresponds to 24–1088; sequence YNLDTRPTQS…DLIHEKEMLH (1065 aa). FG-GAP repeat units follow at residues 28–79 and 80–138; these read TRPT…FCQP and VSLH…GPML. C70 and C77 are disulfide-bonded. The N-linked (GlcNAc...) asparagine glycan is linked to N86. 2 cysteine pairs are disulfide-bonded: C108–C126 and C147–C199. The 173-residue stretch at 153-325 folds into the VWFA domain; the sequence is DLVFLFDGSQ…EKLKDLFTDL (173 aa). 2 N-linked (GlcNAc...) asparagine glycosylation sites follow: N185 and N270. FG-GAP repeat units follow at residues 336–387, 390–443, 444–504, 505–561, and 565–625; these read NRQD…GATF, QEPL…GGRW, NQTQ…LFEM, VSEL…GLSP, and QRIQ…FSPE. N-linked (GlcNAc...) asparagine glycosylation occurs at N444. Residues D466, D468, D470, E474, D528, N530, D532, D536, D588, D592, and D596 each contribute to the Ca(2+) site. C651 and C705 are joined by a disulfide. 4 N-linked (GlcNAc...) asparagine glycosylation sites follow: N668, N696, N724, and N728. An intrachain disulfide couples C768 to C774. N777 carries an N-linked (GlcNAc...) asparagine glycan. Residues C841 and C857 are joined by a disulfide bond. Residues N858, N881, N891, N900, and N928 are each glycosylated (N-linked (GlcNAc...) asparagine). Cystine bridges form between C994–C1010 and C1018–C1049. N1057 is a glycosylation site (N-linked (GlcNAc...) asparagine). A helical membrane pass occupies residues 1089-1109; the sequence is VYVLSGIGGLVLLFLIFLALY. The Cytoplasmic segment spans residues 1110 to 1162; the sequence is KVGFFKRNLKEKMEADGGVPNGSPPEDTDPLAVPGEETKDMGCLEPLRESDKD. A GFFKR motif motif is present at residues 1112-1116; the sequence is GFFKR. A disordered region spans residues 1124-1162; sequence ADGGVPNGSPPEDTDPLAVPGEETKDMGCLEPLRESDKD. Over residues 1145-1162 the composition is skewed to basic and acidic residues; the sequence is EETKDMGCLEPLRESDKD.

Belongs to the integrin alpha chain family. Heterodimer of an alpha and a beta subunit. The ITGAL alpha subunit associates with the ITGB2 beta subunit. Interacts with THBD. Interacts with CD226. In resting T-cells, up to 40% of surface ITGAL is constitutively phosphorylated. Phosphorylation causes conformational changes needed for ligand binding and is necessary for the activation by some physiological agents. Leukocytes.

It localises to the cell membrane. Its function is as follows. Integrin ITGAL/ITGB2 is a receptor for ICAM1, ICAM2, ICAM3 and ICAM4. Integrin ITGAL/ITGB2 is a receptor for F11R. Integrin ITGAL/ITGB2 is a receptor for the secreted form of ubiquitin-like protein ISG15; the interaction is mediated by ITGAL. Involved in a variety of immune phenomena including leukocyte-endothelial cell interaction, cytotoxic T-cell mediated killing, and antibody dependent killing by granulocytes and monocytes. Contributes to natural killer cell cytotoxicity. Involved in leukocyte adhesion and transmigration of leukocytes including T-cells and neutrophils. Acts as a platform at the immunological synapse to translate TCR engagement and density of the ITGAL ligand ICAM1 into graded adhesion. Required for generation of common lymphoid progenitor cells in bone marrow, indicating the role in lymphopoiesis. Integrin ITGAL/ITGB2 in association with ICAM3, contributes to apoptotic neutrophil phagocytosis by macrophages. The protein is Integrin alpha-L of Mus musculus (Mouse).